Reading from the N-terminus, the 427-residue chain is Dorsalin-1 (427 aa).

Positions 1–20 (MHYFGVLAALSVFNIIACLT) are cleaved as a signal peptide. Residues 21 to 318 (RGKPLENWKK…PRQHSSRSKR (298 aa)) constitute a propeptide that is removed on maturation. Asn-71, Asn-136, Asn-265, and Asn-292 each carry an N-linked (GlcNAc...) asparagine glycan. The interval 288-321 (KLGKNDSSSEEEQREEKAIARPRQHSSRSKRSIG) is disordered. Residues 307–321 (ARPRQHSSRSKRSIG) are compositionally biased toward basic residues. Disulfide bonds link Cys-325-Cys-391, Cys-354-Cys-424, and Cys-358-Cys-426.

The protein belongs to the TGF-beta family. In terms of assembly, homodimer; disulfide-linked. As to expression, expressed selectively in the dorsal neural tube. Lower levels seen in kidney and myotomal cells.

The protein localises to the secreted. Functionally, appears to regulate cell differentiation within the neural tube. May regulate the differentiation of cell types along the dorsoventral axis of the neural tube, acting in conjunction with distinct ventralizing signals from the notochord and floor plate. Controls the cell differentiation in the neural tube in several ways: (1) promotes the differentiation of cell types that derive from the dorsal neural tube. (2) ensures that the dorsal neural tube is refractory to ventralizing species from the notochord. (3) can diffuse and influence the fate of cells in more ventral regions of the neural tube. This Gallus gallus (Chicken) protein is Dorsalin-1 (DSL1).